A 526-amino-acid polypeptide reads, in one-letter code: Amine oxidase [flavin-containing] A (526 aa).

The residue at position 1 (Met1) is an N-acetylmethionine. Topologically, residues 1-497 are cytoplasmic; it reads MTDLEKPNLA…HTFLERNLPS (497 aa). Ser383 is subject to Phosphoserine. Cys406 is modified (S-8alpha-FAD cysteine). A helical; Anchor for type IV membrane protein membrane pass occupies residues 498-518; the sequence is VPGLLKITGVSTSVALLCFVL. The Mitochondrial intermembrane segment spans residues 519-526; it reads YKIKKLPC. Residues 520–522 are interaction with membrane phospholipid headgroups; that stretch reads KIK.

Belongs to the flavin monoamine oxidase family. In terms of assembly, monomer, homo- or heterodimer (containing two subunits of similar size). Each subunit contains a covalently bound flavin. Enzymatically active as monomer. The cofactor is FAD.

The protein localises to the mitochondrion outer membrane. The enzyme catalyses a secondary aliphatic amine + O2 + H2O = a primary amine + an aldehyde + H2O2. The catalysed reaction is a primary methyl amine + O2 + H2O = an aldehyde + H2O2 + NH4(+). It carries out the reaction (R)-adrenaline + O2 + H2O = (R)-3,4-dihydroxymandelaldehyde + methylamine + H2O2. It catalyses the reaction dopamine + O2 + H2O = 3,4-dihydroxyphenylacetaldehyde + H2O2 + NH4(+). The enzyme catalyses tyramine + O2 + H2O = (4-hydroxyphenyl)acetaldehyde + H2O2 + NH4(+). The catalysed reaction is (R)-noradrenaline + O2 + H2O = (R)-3,4-dihydroxymandelaldehyde + H2O2 + NH4(+). It carries out the reaction serotonin + O2 + H2O = (5-hydroxyindol-3-yl)acetaldehyde + H2O2 + NH4(+). It catalyses the reaction kynuramine + O2 + H2O = 3-(2-aminophenyl)-3-oxopropanal + H2O2 + NH4(+). The enzyme catalyses tryptamine + O2 + H2O = indole-3-acetaldehyde + H2O2 + NH4(+). The catalysed reaction is 2-phenylethylamine + O2 + H2O = 2-phenylacetaldehyde + H2O2 + NH4(+). In terms of biological role, catalyzes the oxidative deamination of primary and some secondary amine such as neurotransmitters, with concomitant reduction of oxygen to hydrogen peroxide and has important functions in the metabolism of neuroactive and vasoactive amines in the central nervous system and peripheral tissues. Preferentially oxidizes serotonin. Also catalyzes the oxidative deamination of kynuramine to 3-(2-aminophenyl)-3-oxopropanal that can spontaneously condense to 4-hydroxyquinoline. This is Amine oxidase [flavin-containing] A from Rattus norvegicus (Rat).